Reading from the N-terminus, the 960-residue chain is Protein mono-ADP-ribosyltransferase PARP10 (960 aa).

E103 carries the post-translational modification ADP-ribosyl glutamic acid. Positions 325–341 (SMGSTSPVDPVESSTEL) are enriched in polar residues. A disordered region spans residues 325 to 346 (SMGSTSPVDPVESSTELPEQVG). 2 positions are modified to phosphoserine: S381 and S388. A disordered region spans residues 553 to 576 (SPHGGEDRVPLEMEKEKPGGPGET). Residues 555-570 (HGGEDRVPLEMEKEKP) are compositionally biased toward basic and acidic residues. The short motif at 604-621 (LEEEATLQLAIHRSLESQ) is the Ubiquitin-interacting element. The residue at position 617 (S617) is a Phosphoserine. A myc binding region spans residues 649 to 856 (DEDTGGEAQL…CAHGFNRSFC (208 aa)). A PARP catalytic domain is found at 755–960 (PNLSEQGLKE…TCKNILPGTP (206 aa)). A PIP-box motif is present at residues 780–787 (QDVVRAFY). At E831 the chain carries ADP-ribosyl glutamic acid.

Belongs to the ARTD/PARP family. As to quaternary structure, interacts with MYC. Interacts with PARP14. Interacts (via-PIP box and ubiquitin-interacting motifs) with PCNA. Post-translationally, stimulated through its phosphorylation by CDK2. Acquires CDK-dependent phosphorylation through late-G1 to S phase, and from prometaphase to cytokinesis in the nucleolar organizing regions. Phosphorylation is suppressed in growth-arrested cells. In terms of processing, auto-mono-ADP-ribosylated on glutamate and lysine residues.

The protein localises to the cytoplasm. It localises to the nucleus. The catalysed reaction is L-lysyl-[protein] + NAD(+) = N(6)-(ADP-D-ribosyl)-L-lysyl-[protein] + nicotinamide + H(+). The enzyme catalyses L-aspartyl-[protein] + NAD(+) = 4-O-(ADP-D-ribosyl)-L-aspartyl-[protein] + nicotinamide. It catalyses the reaction L-glutamyl-[protein] + NAD(+) = 5-O-(ADP-D-ribosyl)-L-glutamyl-[protein] + nicotinamide. ADP-ribosyltransferase that mediates mono-ADP-ribosylation of glutamate and aspartate residues on target proteins. In contrast to PARP1 and PARP2, it is not able to mediate poly-ADP-ribosylation. Catalyzes mono-ADP-ribosylation of GSK3B, leading to negatively regulate GSK3B kinase activity. Involved in translesion DNA synthesis in response to DNA damage via its interaction with PCNA. This is Protein mono-ADP-ribosyltransferase PARP10 from Mus musculus (Mouse).